We begin with the raw amino-acid sequence, 428 residues long: Palmitoyltransferase pfa4 (428 aa).

At 1 to 10 the chain is on the cytoplasmic side; that stretch reads MLCRSFNISQ. A helical transmembrane segment spans residues 11–31; it reads LAIPFVSVLISFLAYTSQLFF. At 32–43 the chain is on the lumenal side; the sequence is YYFEEAPLRSEE. The chain crosses the membrane as a helical span at residues 44–61; sequence FWRLNIFAVCIWVCYYRA. Residues 62-134 lie on the Cytoplasmic side of the membrane; that stretch reads CTVDPGRIPK…SNCVSHFTYP (73 aa). In terms of domain architecture, DHHC spans 91–141; sequence RWCRRCEAFKPPRAHHCKTCQRCIPKMDHHCPWTSNCVSHFTYPHFMRFLF. The S-palmitoyl cysteine intermediate role is filled by cysteine 121. The chain crosses the membrane as a helical span at residues 135-155; that stretch reads HFMRFLFYAVVGMGYLETLLF. Topologically, residues 156–177 are lumenal; that stretch reads ERASIVWASRHLPSYLGPGLGQ. Residues 178-198 traverse the membrane as a helical segment; sequence LVHLFILLVVNSLTWLALFIL. Residues 199–428 are Cytoplasmic-facing; it reads LLRSIWSLAL…GILMQRRRQQ (230 aa). The disordered stretch occupies residues 339 to 400; that stretch reads QRSNDASHSG…WKNSEGDRLR (62 aa). Basic and acidic residues predominate over residues 360–373; that stretch reads DRFNENKAKERLSE. The span at 374–388 shows a compositional bias: acidic residues; it reads SESDFSDDEEVQDGE. Positions 389 to 400 are enriched in basic and acidic residues; sequence EGWKNSEGDRLR.

The protein belongs to the DHHC palmitoyltransferase family. PFA4 subfamily.

It localises to the endoplasmic reticulum membrane. It carries out the reaction L-cysteinyl-[protein] + hexadecanoyl-CoA = S-hexadecanoyl-L-cysteinyl-[protein] + CoA. Its function is as follows. Mediates the reversible addition of palmitate to target proteins, thereby regulating their membrane association and biological function. In Aspergillus fumigatus (strain ATCC MYA-4609 / CBS 101355 / FGSC A1100 / Af293) (Neosartorya fumigata), this protein is Palmitoyltransferase pfa4.